The primary structure comprises 353 residues: MKTRFDKAKISGICVSVPEHKICIDDELESVFSNDIKTLKRMKKVIGLNTRYICDENTCVSDLGKHAANTLLQGLNIDKNSLDALIVVTQSPDFFMPSTACYLHQLLNLSSKTVAFDLGQACAGYLYGLFVAHSLIQSGLGKILLICGDTLSKFIHPKNMNLAPIFGDGVSATLIEKTDFNEAFFELGSDGKYFDKLIIPKGAMRIPKADIFNDDSLMQTEEFRQLENLYMDGANIFNMALECEPKSFKEILEFSKVDEKDIAFHLFHQSNAYLVDCIKEELKLNDDKVPNFIMEKYANLSACSLPTLLCELDTPKEFKASLSAFGAGLSWGSAVLNFKDLYTKNILIYTKEK.

Catalysis depends on residues C122, H268, and N299.

It belongs to the thiolase-like superfamily. FabH family. Homodimer.

The protein localises to the cytoplasm. It carries out the reaction malonyl-[ACP] + acetyl-CoA + H(+) = 3-oxobutanoyl-[ACP] + CO2 + CoA. The protein operates within lipid metabolism; fatty acid biosynthesis. Functionally, may catalyze the condensation reaction of fatty acid synthesis by the addition to an acyl acceptor of two carbons from malonyl-ACP. The sequence is that of Putative 3-oxoacyl-[acyl-carrier-protein] synthase 3 from Campylobacter jejuni subsp. jejuni serotype O:2 (strain ATCC 700819 / NCTC 11168).